The sequence spans 295 residues: MNSKPSWLRVKMPGGEVFEEVRDLVKRQRLNTVCEEAACPNIGECWNKRHATIMVMGDVCTRACAFCNVKTGVPRALDLGEPERVGEAISKLGLKHVVITSVDRDDLPDGGASHFAKCIREIRKRDPNVTIEILTPDFQGKPGAVDVIASARPDVYNHNLETVPRLYARVRPRAKYFNSLQLLQQVKDKTQGVFTKSGLMLGLGEQKEEVYQVMDDLRCAGVDFLVLGQYLQPTKDNIDVDRYVTPEEFEQYKRMAYAKGFSMVASSPLARSSYHAEDDFLRLRALRTARMRVAT.

The [4Fe-4S] cluster site is built by cysteine 34, cysteine 39, cysteine 45, cysteine 60, cysteine 64, cysteine 67, and serine 273. In terms of domain architecture, Radical SAM core spans 46–262 (WNKRHATIMV…KRMAYAKGFS (217 aa)).

The protein belongs to the radical SAM superfamily. Lipoyl synthase family. [4Fe-4S] cluster serves as cofactor.

It localises to the cytoplasm. The enzyme catalyses [[Fe-S] cluster scaffold protein carrying a second [4Fe-4S](2+) cluster] + N(6)-octanoyl-L-lysyl-[protein] + 2 oxidized [2Fe-2S]-[ferredoxin] + 2 S-adenosyl-L-methionine + 4 H(+) = [[Fe-S] cluster scaffold protein] + N(6)-[(R)-dihydrolipoyl]-L-lysyl-[protein] + 4 Fe(3+) + 2 hydrogen sulfide + 2 5'-deoxyadenosine + 2 L-methionine + 2 reduced [2Fe-2S]-[ferredoxin]. It participates in protein modification; protein lipoylation via endogenous pathway; protein N(6)-(lipoyl)lysine from octanoyl-[acyl-carrier-protein]: step 2/2. Catalyzes the radical-mediated insertion of two sulfur atoms into the C-6 and C-8 positions of the octanoyl moiety bound to the lipoyl domains of lipoate-dependent enzymes, thereby converting the octanoylated domains into lipoylated derivatives. This Anaplasma phagocytophilum (strain HZ) protein is Lipoyl synthase.